A 319-amino-acid polypeptide reads, in one-letter code: Sulfate adenylyltransferase subunit 2 (319 aa).

Belongs to the PAPS reductase family. CysD subfamily. As to quaternary structure, heterodimer composed of CysD, the smaller subunit, and CysN.

The catalysed reaction is sulfate + ATP + H(+) = adenosine 5'-phosphosulfate + diphosphate. It participates in sulfur metabolism; hydrogen sulfide biosynthesis; sulfite from sulfate: step 1/3. Its function is as follows. With CysN forms the ATP sulfurylase (ATPS) that catalyzes the adenylation of sulfate producing adenosine 5'-phosphosulfate (APS) and diphosphate, the first enzymatic step in sulfur assimilation pathway. APS synthesis involves the formation of a high-energy phosphoric-sulfuric acid anhydride bond driven by GTP hydrolysis by CysN coupled to ATP hydrolysis by CysD. The sequence is that of Sulfate adenylyltransferase subunit 2 from Methylobacterium radiotolerans (strain ATCC 27329 / DSM 1819 / JCM 2831 / NBRC 15690 / NCIMB 10815 / 0-1).